The primary structure comprises 935 residues: Isoleucine--tRNA ligase (935 aa).

Positions 58-68 (PYANGSIHVGH) match the 'HIGH' region motif. Glutamate 558 is a binding site for L-isoleucyl-5'-AMP. Positions 599 to 603 (KMSKS) match the 'KMSKS' region motif. Lysine 602 is an ATP binding site. Positions 897, 900, 917, and 920 each coordinate Zn(2+).

It belongs to the class-I aminoacyl-tRNA synthetase family. IleS type 1 subfamily. In terms of assembly, monomer. Requires Zn(2+) as cofactor.

The protein localises to the cytoplasm. It catalyses the reaction tRNA(Ile) + L-isoleucine + ATP = L-isoleucyl-tRNA(Ile) + AMP + diphosphate. Functionally, catalyzes the attachment of isoleucine to tRNA(Ile). As IleRS can inadvertently accommodate and process structurally similar amino acids such as valine, to avoid such errors it has two additional distinct tRNA(Ile)-dependent editing activities. One activity is designated as 'pretransfer' editing and involves the hydrolysis of activated Val-AMP. The other activity is designated 'posttransfer' editing and involves deacylation of mischarged Val-tRNA(Ile). This chain is Isoleucine--tRNA ligase, found in Francisella philomiragia subsp. philomiragia (strain ATCC 25017 / CCUG 19701 / FSC 153 / O#319-036).